A 436-amino-acid polypeptide reads, in one-letter code: Prenyltransferase nscD (436 aa).

The protein belongs to the tryptophan dimethylallyltransferase family.

The protein operates within secondary metabolite biosynthesis. Functionally, prenyltransferase; part of the gene cluster that mediates the biosynthesis of neosartoricin B, a prenylated anthracenone that probably exhibits T-cell antiproliferative activity, suggestive of a physiological role as an immunosuppressive agent. The non-reducing polyketide synthase nscA probably synthesizes and cyclizes the decaketide backbone. The hydrolase nscB then mediates the product release through hydrolysis followed by spontaneous decarboxylation. The prenyltransferase nscD catalyzes the addition of the dimethylallyl group to the aromatic C5. The FAD-dependent monooxygenase nscC is then responsible for the stereospecific hydroxylation at C2. Neosartoricin B can be converted into two additional compounds neosartoricins C and D. Neosartoricin C is a spirocyclic compound that is cyclized through the attack of C3 hydroxyl on C14, followed by dehydration. On the other hand, neosartoricin D is a further cyclized compound in which attack of C2 on C14 in neosartoricin C results in the formation of the acetal-containing dioxabicyclo-octanone ring. Both of these compounds are novel and possibly represent related metabolites of the gene cluster. In Arthroderma gypseum (strain ATCC MYA-4604 / CBS 118893) (Microsporum gypseum), this protein is Prenyltransferase nscD.